Here is a 620-residue protein sequence, read N- to C-terminus: UDP-glucose:protein N-beta-glucosyltransferase (620 aa).

It belongs to the glycosyltransferase 41 family. The cofactor is Does not require a metal cofactor..

The protein resides in the cytoplasm. It carries out the reaction L-asparaginyl-[protein] + UDP-alpha-D-glucose = N(4)-(beta-D-glucosyl)-L-asparaginyl-[protein] + UDP + H(+). It functions in the pathway protein modification; protein glycosylation. Its function is as follows. Inverting glycosyltransferase that catalyzes the transfer of one glucose moiety from UDP-glucose to an asparagine residue in peptides and proteins containing the NX(S/T) motif, resulting in their modification with a beta-linked 1,N-glucose. Likely acts as a key component of a general protein glycosylation system. Also accepts UDP-galactose as a substrate donor, albeit with low efficiency. Cannot use UDP-GlcNAc or UDP-GalNAc as substrate donor. In Actinobacillus pleuropneumoniae serotype 7 (strain AP76), this protein is UDP-glucose:protein N-beta-glucosyltransferase.